We begin with the raw amino-acid sequence, 84 residues long: Subtilisin-chymotrypsin inhibitor WSCI (84 aa).

An N-terminal signal peptide occupies residues 1–12; the sequence is MSSVVKKPLGGN. Residues 1 to 28 form a disordered region; that stretch reads MSSVVKKPLGGNTDTGDHHNQKTEWPEL. Basic and acidic residues predominate over residues 15-25; the sequence is TGDHHNQKTEW.

In terms of assembly, monomer.

The protein resides in the secreted. Functionally, inhibits B.lichenoformis subtilisin, B.subtilis subtilisin, bovine pancreatic alpha-chymotrypsin and porcine alpha-chymotrypsin with Ki of 3.92 nM, 5.70 nM, 7.24 nM and 9.35 nM respectively. B.lichenoformis subtilisin is inhibited with a molar ratio of 1:0.87. Also inhibits chymotrypsin-like activities from the digestive tracts of the insect larvae T.molitor, P.interpunctella and H.armigera. Does not inhibit bovine pancreatic trypsin, porcine pancreatic elastase, or human leukocyte elastase. The polypeptide is Subtilisin-chymotrypsin inhibitor WSCI (Triticum aestivum (Wheat)).